A 294-amino-acid polypeptide reads, in one-letter code: Cytidine deaminase (294 aa).

CMP/dCMP-type deaminase domains are found at residues 48–168 (DEDA…FGPK) and 186–294 (LTGN…VLLG). Residue 89 to 91 (NME) participates in substrate binding. H102 is a Zn(2+) binding site. E104 functions as the Proton donor in the catalytic mechanism. Zn(2+) is bound by residues C129 and C132.

Belongs to the cytidine and deoxycytidylate deaminase family. Homodimer. The cofactor is Zn(2+).

The enzyme catalyses cytidine + H2O + H(+) = uridine + NH4(+). It carries out the reaction 2'-deoxycytidine + H2O + H(+) = 2'-deoxyuridine + NH4(+). In terms of biological role, this enzyme scavenges exogenous and endogenous cytidine and 2'-deoxycytidine for UMP synthesis. In Salmonella typhi, this protein is Cytidine deaminase.